Reading from the N-terminus, the 468-residue chain is Glycine--tRNA ligase (468 aa).

2 residues coordinate substrate: Arg-101 and Glu-170. ATP is bound by residues 202-204 (RNE), 212-217 (FRTREF), 289-290 (EL), and 333-336 (GLTR). 217-221 (FEQME) provides a ligand contact to substrate. A substrate-binding site is contributed by 329-333 (EPAAG).

This sequence belongs to the class-II aminoacyl-tRNA synthetase family. Homodimer.

It localises to the cytoplasm. The enzyme catalyses tRNA(Gly) + glycine + ATP = glycyl-tRNA(Gly) + AMP + diphosphate. Its function is as follows. Catalyzes the attachment of glycine to tRNA(Gly). This Mycolicibacterium vanbaalenii (strain DSM 7251 / JCM 13017 / BCRC 16820 / KCTC 9966 / NRRL B-24157 / PYR-1) (Mycobacterium vanbaalenii) protein is Glycine--tRNA ligase.